The following is a 191-amino-acid chain: MDVWKRQRLQECRELCPLPVLMSLSNMFSKIEIVYVKYLFKMDFSTMYRYILPALTLSMTVTKSLVIEMLFILKRWEDIDQFFRLNIRKVNDCFIVAQFNHIPIKRKLIVLLYMLTSRQEKQLFLNMIYAFLEKSHLRLGDDEEQNAIRFFSYVDDLHLTRDILLEMIHKLKNTEINQTMELLLSYNELAR.

The helical transmembrane segment at 50 to 72 (YILPALTLSMTVTKSLVIEMLFI) threads the bilayer.

Its subcellular location is the membrane. This is an uncharacterized protein from Human herpesvirus 6A (strain Uganda-1102) (HHV-6 variant A).